The chain runs to 216 residues: MQAYNTQTGIVCPLDRSNVDTDQIIPKQFLKSIKRTGFGVNLFDDWRYLDEGFPGQDNSKRPINPDFVLNKPRYQGATILLARDNFGCGSSREHAPWALSEYGFRTVIAPSFADIFYNNCFKNGMLPIVLTEAQVDDLFEQCLANEGYELTADLERQVVVTPDGTEYPFEVDEFRKHCLLNGLDDIGLTLQQSEAIKAYEAKMQQNTPWIFKEVRA.

This sequence belongs to the LeuD family. LeuD type 1 subfamily. As to quaternary structure, heterodimer of LeuC and LeuD.

The enzyme catalyses (2R,3S)-3-isopropylmalate = (2S)-2-isopropylmalate. The protein operates within amino-acid biosynthesis; L-leucine biosynthesis; L-leucine from 3-methyl-2-oxobutanoate: step 2/4. Catalyzes the isomerization between 2-isopropylmalate and 3-isopropylmalate, via the formation of 2-isopropylmaleate. In Psychrobacter sp. (strain PRwf-1), this protein is 3-isopropylmalate dehydratase small subunit.